Consider the following 251-residue polypeptide: Low molecular mass lipoprotein PBMHPC-21 (251 aa).

An N-terminal signal peptide occupies residues 1–16; the sequence is MKFVVVFASCVLAVSA.

The protein belongs to the 30 kDa lipoprotein family.

It is found in the secreted. The protein is Low molecular mass lipoprotein PBMHPC-21 of Bombyx mori (Silk moth).